The primary structure comprises 556 residues: Dihydroxy-acid dehydratase (556 aa).

Mg(2+) is bound at residue aspartate 78. Cysteine 119 provides a ligand contact to [2Fe-2S] cluster. 2 residues coordinate Mg(2+): aspartate 120 and lysine 121. Lysine 121 carries the post-translational modification N6-carboxylysine. Cysteine 191 contributes to the [2Fe-2S] cluster binding site. Glutamate 442 lines the Mg(2+) pocket. Serine 468 (proton acceptor) is an active-site residue.

This sequence belongs to the IlvD/Edd family. Homodimer. [2Fe-2S] cluster serves as cofactor. Requires Mg(2+) as cofactor.

The enzyme catalyses (2R)-2,3-dihydroxy-3-methylbutanoate = 3-methyl-2-oxobutanoate + H2O. It catalyses the reaction (2R,3R)-2,3-dihydroxy-3-methylpentanoate = (S)-3-methyl-2-oxopentanoate + H2O. Its pathway is amino-acid biosynthesis; L-isoleucine biosynthesis; L-isoleucine from 2-oxobutanoate: step 3/4. The protein operates within amino-acid biosynthesis; L-valine biosynthesis; L-valine from pyruvate: step 3/4. Functionally, functions in the biosynthesis of branched-chain amino acids. Catalyzes the dehydration of (2R,3R)-2,3-dihydroxy-3-methylpentanoate (2,3-dihydroxy-3-methylvalerate) into 2-oxo-3-methylpentanoate (2-oxo-3-methylvalerate) and of (2R)-2,3-dihydroxy-3-methylbutanoate (2,3-dihydroxyisovalerate) into 2-oxo-3-methylbutanoate (2-oxoisovalerate), the penultimate precursor to L-isoleucine and L-valine, respectively. In Caldanaerobacter subterraneus subsp. tengcongensis (strain DSM 15242 / JCM 11007 / NBRC 100824 / MB4) (Thermoanaerobacter tengcongensis), this protein is Dihydroxy-acid dehydratase.